A 210-amino-acid chain; its full sequence is MRPRLWLLLAAQLTVLHGNSVLQQTPAYIKVQTNKMVMLSCEAKISLSNMRIYWLRQRQAPSSDSHHEFLALWDSAKGTIHGEEVEQEKIAVFRDASRFILNLTSVKPEDSGIYFCMIVGSPELTFGKGTQLSVVDFLPTTAQPTKKSTLKKRVCRLPRPETQKGPLCSPITLGLLVAGVLVLLVSLGVAIHLCCRRRRARLRFMKQFYK.

An N-terminal signal peptide occupies residues 1–21 (MRPRLWLLLAAQLTVLHGNSV). The Ig-like V-type domain occupies 22–132 (LQQTPAYIKV…ELTFGKGTQL (111 aa)). The Extracellular portion of the chain corresponds to 22 to 170 (LQQTPAYIKV…ETQKGPLCSP (149 aa)). Cys41 and Cys116 are joined by a disulfide. N-linked (GlcNAc...) asparagine glycosylation is present at Asn102. Residues 171-191 (ITLGLLVAGVLVLLVSLGVAI) form a helical membrane-spanning segment. Residues 192-210 (HLCCRRRRARLRFMKQFYK) lie on the Cytoplasmic side of the membrane. Phosphotyrosine is present on Tyr209.

Forms disulfide-linked heterodimers with CD8A at the cell surface. Interacts with CD3D; this interaction couples TCR-CD3 with CD8. Interacts with LCK. Post-translationally, phosphorylated as a consequence of T-cell activation. Palmitoylated at the cytoplasmic tail and thereby targets the heterodimer CD8A/CD8B to lipid rafts unlike CD8A homodimers. As to expression, isoform 1, isoform 3, isoform 5, isoform 6, isoform 7 and isoform 8 are expressed in both thymus and peripheral CD8+ T-cells. Expression of isoform 1 is higher in thymus CD8+ T-cells than in peripheral CD8+ T-cells. Expression of isoform 6 is higher in peripheral CD8+ T-cells than in thymus CD8+ T-cells.

The protein localises to the cell membrane. It localises to the secreted. Functionally, integral membrane glycoprotein that plays an essential role in the immune response and serves multiple functions in responses against both external and internal offenses. In T-cells, functions primarily as a coreceptor for MHC class I molecule:peptide complex. The antigens presented by class I peptides are derived from cytosolic proteins while class II derived from extracellular proteins. Interacts simultaneously with the T-cell receptor (TCR) and the MHC class I proteins presented by antigen presenting cells (APCs). In turn, recruits the Src kinase LCK to the vicinity of the TCR-CD3 complex. A palmitoylation site in the cytoplasmic tail of CD8B chain contributes to partitioning of CD8 into the plasma membrane lipid rafts where signaling proteins are enriched. Once LCK recruited, it initiates different intracellular signaling pathways by phosphorylating various substrates ultimately leading to lymphokine production, motility, adhesion and activation of cytotoxic T-lymphocytes (CTLs). Additionally, plays a critical role in thymic selection of CD8+ T-cells. This is T-cell surface glycoprotein CD8 beta chain (CD8B) from Homo sapiens (Human).